Reading from the N-terminus, the 840-residue chain is Protein translocase subunit SecA (840 aa).

ATP is bound by residues Gln-85, 103–107, and Asp-492; that span reads GEGKT. Residues 787–821 are disordered; it reads QRERVAKETGASHGGDSQEIKKKPVKKEPKVGRND. A compositionally biased stretch (basic and acidic residues) spans 802 to 819; the sequence is DSQEIKKKPVKKEPKVGR. Residues Cys-823, Cys-825, Cys-834, and Cys-835 each contribute to the Zn(2+) site.

It belongs to the SecA family. In terms of assembly, monomer and homodimer. Part of the essential Sec protein translocation apparatus which comprises SecA, SecYEG and auxiliary proteins SecDF. Other proteins may also be involved. The cofactor is Zn(2+).

It localises to the cell membrane. The protein localises to the cytoplasm. The enzyme catalyses ATP + H2O + cellular proteinSide 1 = ADP + phosphate + cellular proteinSide 2.. Part of the Sec protein translocase complex. Interacts with the SecYEG preprotein conducting channel. Has a central role in coupling the hydrolysis of ATP to the transfer of proteins into and across the cell membrane, serving as an ATP-driven molecular motor driving the stepwise translocation of polypeptide chains across the membrane. The chain is Protein translocase subunit SecA from Clostridium perfringens (strain 13 / Type A).